The primary structure comprises 378 residues: Putative glutamate--cysteine ligase 2 (378 aa).

This sequence belongs to the glutamate--cysteine ligase type 2 family. YbdK subfamily.

The catalysed reaction is L-cysteine + L-glutamate + ATP = gamma-L-glutamyl-L-cysteine + ADP + phosphate + H(+). ATP-dependent carboxylate-amine ligase which exhibits weak glutamate--cysteine ligase activity. The chain is Putative glutamate--cysteine ligase 2 from Leifsonia xyli subsp. xyli (strain CTCB07).